Consider the following 612-residue polypeptide: Cyclin-dependent kinase G1 (612 aa).

The segment covering 26–54 has biased composition (basic and acidic residues); the sequence is SRDVYVRQSGRDDERRQIKRPSDHDLRRN. Disordered stretches follow at residues 26-60 and 239-278; these read SRDVYVRQSGRDDERRQIKRPSDHDLRRNDGRHRS and CYSSGSGSGHLSVEKLSADGNSGREYYSSDHDELEHEDQD. Positions 297 to 593 constitute a Protein kinase domain; sequence FQKLNKINEG…VEDALNHGWF (297 aa). Residues 303-311 and lysine 326 contribute to the ATP site; that span reads INEGTYGIV. Tyrosine 308 carries the post-translational modification Phosphotyrosine. Aspartate 426 functions as the Proton acceptor in the catalytic mechanism. Position 453 is a phosphoserine (serine 453). Threonine 459 carries the phosphothreonine modification.

Belongs to the protein kinase superfamily. Ser/Thr protein kinase family. Forms a complex with CYCL1-1. Associated with the spliceosome. Interacts with RS2Z33. In terms of tissue distribution, expressed in leaves and inflorescences. Lower levels of expression in roots and stems.

It localises to the nucleus speckle. The catalysed reaction is L-seryl-[protein] + ATP = O-phospho-L-seryl-[protein] + ADP + H(+). The enzyme catalyses L-threonyl-[protein] + ATP = O-phospho-L-threonyl-[protein] + ADP + H(+). Cyclin-dependent kinase involved in pre-mRNA splicing. Required for the correct splicing of the sixth intron of CALS5 pre-mRNA. May stabilize the binding of U1 snRNP to this rare type of intron with a GC 5'SS. Involved in chromosome pairing and is required for the completion of synapsis in male meiocytes at high ambient temperatures. This Arabidopsis thaliana (Mouse-ear cress) protein is Cyclin-dependent kinase G1 (CDKG1).